The sequence spans 493 residues: MSALGVTVALLVWAAFLLLVSMWRQVHSSWNLPPGPFPLPIIGNLFQLELKNIPKSFTRLAQRFGPVFTLYVGSQRMVVMHGYKAVKEALLDYKDEFSGRGDLPAFHAHRDRGIIFNNGPTWKDIRRFSLTTLRNYGMGKQGNESRIQREAHFLLEALRKTQGQPFDPTFLIGCAPCNVIADILFRKHFDYNDEKFLRLMYLFNENFHLLSTPWLQLYNNFPSFLHYLPGSHRKVIKNVAEVKEYVSERVKEHHQSLDPNCPRDLTDCLLVEMEKEKHSAERLYTMDGITVTVADLFFAGTETTSTTLRYGLLILMKYPEIEEKLHEEIDRVIGPSRIPAIKDRQEMPYMDAVVHEIQRFITLVPSNLPHEATRDTIFRGYLIPKGTVVVPTLDSVLYDNQEFPDPEKFKPEHFLNENGKFKYSDYFKPFSTGKRVCAGEGLARMELFLLLCAILQHFNLKPLVDPKDIDLSPIHIGFGCIPPRYKLCVIPRS.

298-303 (FAGTET) lines the substrate pocket. Cys437 contacts heme.

The protein belongs to the cytochrome P450 family. Interacts with chaperones HSP70 and HSP90; this interaction is required for initial targeting to mitochondria. The cofactor is heme.

Its subcellular location is the endoplasmic reticulum membrane. It is found in the microsome membrane. The protein localises to the mitochondrion inner membrane. The enzyme catalyses an organic molecule + reduced [NADPH--hemoprotein reductase] + O2 = an alcohol + oxidized [NADPH--hemoprotein reductase] + H2O + H(+). It catalyses the reaction (5Z,8Z,11Z)-eicosatrienoate + reduced [NADPH--hemoprotein reductase] + O2 = 19-hydroxy-(5Z,8Z,11Z)-eicosatrienoate + oxidized [NADPH--hemoprotein reductase] + H2O + H(+). The catalysed reaction is (5Z,8Z,11Z,14Z,17Z)-eicosapentaenoate + reduced [NADPH--hemoprotein reductase] + O2 = 19-hydroxy-(5Z,8Z,11Z,14Z,17Z)-eicosapentaenoate + oxidized [NADPH--hemoprotein reductase] + H2O + H(+). It carries out the reaction (4Z,7Z,10Z,13Z,16Z,19Z)-docosahexaenoate + reduced [NADPH--hemoprotein reductase] + O2 = 21-hydroxy-(4Z,7Z,10Z,13Z,16Z,19Z)-docosahexaenoate + oxidized [NADPH--hemoprotein reductase] + H2O + H(+). The enzyme catalyses dodecanoate + reduced [NADPH--hemoprotein reductase] + O2 = 11-hydroxydodecanoate + oxidized [NADPH--hemoprotein reductase] + H2O + H(+). It catalyses the reaction tetradecanoate + reduced [NADPH--hemoprotein reductase] + O2 = 13-hydroxytetradecanoate + oxidized [NADPH--hemoprotein reductase] + H2O + H(+). The catalysed reaction is 4-nitrophenol + NADPH + O2 + H(+) = 4-nitrocatechol + NADP(+) + H2O. It participates in lipid metabolism; fatty acid metabolism. With respect to regulation, the omega-1 hydroxylase activity is stimulated by cytochrome b5. Its function is as follows. A cytochrome P450 monooxygenase involved in the metabolism of fatty acids. Mechanistically, uses molecular oxygen inserting one oxygen atom into a substrate, and reducing the second into a water molecule, with two electrons provided by NADPH via cytochrome P450 reductase (NADPH--hemoprotein reductase). Catalyzes the hydroxylation of carbon-hydrogen bonds. Hydroxylates fatty acids specifically at the omega-1 position displaying the highest catalytic activity for saturated fatty acids. May be involved in the oxidative metabolism of xenobiotics. This is Cytochrome P450 2E1 from Homo sapiens (Human).